Here is a 494-residue protein sequence, read N- to C-terminus: Cytochrome P450 2A10 (494 aa).

The residue at position 379 (K379) is an N6-acetyllysine. C439 is a binding site for heme.

Belongs to the cytochrome P450 family. Heme is required as a cofactor. Expressed in liver and lung as well as in nasal tissues.

The protein resides in the endoplasmic reticulum membrane. It is found in the microsome membrane. The catalysed reaction is an organic molecule + reduced [NADPH--hemoprotein reductase] + O2 = an alcohol + oxidized [NADPH--hemoprotein reductase] + H2O + H(+). Functionally, catalyzes the oxygenation of a variety of substrates, including ethanol and procarcinogens such as N-nitrosodiethylamine and phenacetin. Exhibits a high coumarin 7-hydroxylase activity. Converts also testosterone to androstenedione. In Oryctolagus cuniculus (Rabbit), this protein is Cytochrome P450 2A10 (CYP2A10).